The sequence spans 508 residues: Light-independent protochlorophyllide reductase subunit B (508 aa).

Residue Asp-36 coordinates [4Fe-4S] cluster. Residue Asp-294 is the Proton donor of the active site. 429–430 (GM) is a substrate binding site.

Belongs to the ChlB/BchB/BchZ family. Protochlorophyllide reductase is composed of three subunits; ChlL, ChlN and ChlB. Forms a heterotetramer of two ChlB and two ChlN subunits. It depends on [4Fe-4S] cluster as a cofactor.

It catalyses the reaction chlorophyllide a + oxidized 2[4Fe-4S]-[ferredoxin] + 2 ADP + 2 phosphate = protochlorophyllide a + reduced 2[4Fe-4S]-[ferredoxin] + 2 ATP + 2 H2O. Its pathway is porphyrin-containing compound metabolism; chlorophyll biosynthesis (light-independent). Its function is as follows. Component of the dark-operative protochlorophyllide reductase (DPOR) that uses Mg-ATP and reduced ferredoxin to reduce ring D of protochlorophyllide (Pchlide) to form chlorophyllide a (Chlide). This reaction is light-independent. The NB-protein (ChlN-ChlB) is the catalytic component of the complex. This chain is Light-independent protochlorophyllide reductase subunit B, found in Rippkaea orientalis (strain PCC 8801 / RF-1) (Cyanothece sp. (strain PCC 8801)).